We begin with the raw amino-acid sequence, 372 residues long: MSNQHMLLLFNLLPVGSNISTWWNFGSMLLTCLALQTMTGFFLAIHYTANINLAFSSIVHITRDVPYGWMMQNLHAIGASMFFICIYIHIARGLYYGSFLNKNVWLSGTTLLIILMATAFFGYVLPWGQMSFWAATVITNLLTAVPYIGTELTNWLWGGFSINDPTLTRFFALHFILPFTIISMSSIHIMLLHTEGSSNPLGTNSDIDKIPFHPYHSHKDMLMLTIMMTALFIIMSFMPNIFNDPENFSKANPLVTPQHIKPEWYFLFAYGILRSIPNKLGGTVALVLSVTILMTMPFTHTSHFRSMTFRPLMQFMFWTLVATFITITWAATKPVEPPFTTIGQATAILYFTFFIMNPLLGWLENKISITNM.

Transmembrane regions (helical) follow at residues 25-45, 69-90, 105-125, and 170-190; these read FGSMLLTCLALQTMTGFFLAI, WMMQNLHAIGASMFFICIYIHI, WLSGTTLLIILMATAFFGYVL, and FFALHFILPFTIISMSSIHIM. The heme b site is built by H75 and H89. Heme b contacts are provided by H174 and H188. H193 contributes to the a ubiquinone binding site. Helical transmembrane passes span 218–238, 280–300, 312–332, and 339–358; these read HKDMLMLTIMMTALFIIMSFM, LGGTVALVLSVTILMTMPFTH, LMQFMFWTLVATFITITWAAT, and FTTIGQATAILYFTFFIMNP.

The protein belongs to the cytochrome b family. In terms of assembly, the cytochrome bc1 complex contains 3 respiratory subunits (MT-CYB, CYC1 and UQCRFS1), 2 core proteins (UQCRC1 and UQCRC2) and probably 6 low-molecular weight proteins. Heme b serves as cofactor.

It is found in the mitochondrion inner membrane. Its function is as follows. Component of the ubiquinol-cytochrome c reductase complex (complex III or cytochrome b-c1 complex) that is part of the mitochondrial respiratory chain. The b-c1 complex mediates electron transfer from ubiquinol to cytochrome c. Contributes to the generation of a proton gradient across the mitochondrial membrane that is then used for ATP synthesis. This Pantherophis obsoletus (Black ratsnake) protein is Cytochrome b (MT-CYB).